Here is an 89-residue protein sequence, read N- to C-terminus: Small ribosomal subunit protein uS14 (89 aa).

This sequence belongs to the universal ribosomal protein uS14 family. In terms of assembly, part of the 30S ribosomal subunit. Contacts proteins S3 and S10.

Its function is as follows. Binds 16S rRNA, required for the assembly of 30S particles and may also be responsible for determining the conformation of the 16S rRNA at the A site. The protein is Small ribosomal subunit protein uS14 of Shouchella clausii (strain KSM-K16) (Alkalihalobacillus clausii).